The following is a 314-amino-acid chain: Deoxyhypusine hydroxylase (314 aa).

Met1 is subject to N-acetylmethionine. HEAT-like PBS-type repeat units follow at residues Leu61–Asp87, Val94–Ser120, Glu188–Ala214, Leu219–Asp245, and Val252–Asp278. Positions 63, 64, 96, and 97 each coordinate Fe cation. His221, Glu222, His254, and Glu255 together coordinate Fe cation.

The protein belongs to the deoxyhypusine hydroxylase family. The cofactor is Fe(2+).

The enzyme catalyses [eIF5A protein]-deoxyhypusine + AH2 + O2 = [eIF5A protein]-hypusine + A + H2O. It functions in the pathway protein modification; eIF5A hypusination. In terms of biological role, catalyzes the hydroxylation of the N(6)-(4-aminobutyl)-L-lysine intermediate to form hypusine, an essential post-translational modification only found in mature eIF-5A factor. The sequence is that of Deoxyhypusine hydroxylase from Arabidopsis thaliana (Mouse-ear cress).